Reading from the N-terminus, the 425-residue chain is GTPase Obg (425 aa).

Residues 1–158 (MFIDKARIFV…RWITLELKMI (158 aa)) form the Obg domain. An OBG-type G domain is found at 159–330 (ADVGLLGFPN…VIAYVSKMLK (172 aa)). GTP-binding positions include 165-172 (GFPNVGKS), 190-194 (FTTLT), 212-215 (DIPG), 282-285 (NKFD), and 311-313 (SAA). Mg(2+)-binding residues include Ser-172 and Thr-192. One can recognise an OCT domain in the interval 344–425 (YRPELDIGTE…IYELEFEFYN (82 aa)).

Belongs to the TRAFAC class OBG-HflX-like GTPase superfamily. OBG GTPase family. Monomer. Mg(2+) serves as cofactor.

It localises to the cytoplasm. Its function is as follows. An essential GTPase which binds GTP, GDP and possibly (p)ppGpp with moderate affinity, with high nucleotide exchange rates and a fairly low GTP hydrolysis rate. Plays a role in control of the cell cycle, stress response, ribosome biogenesis and in those bacteria that undergo differentiation, in morphogenesis control. The sequence is that of GTPase Obg from Clostridioides difficile (strain 630) (Peptoclostridium difficile).